The chain runs to 394 residues: Elongation factor Tu (394 aa).

A tr-type G domain is found at 10–204 (KPHVNVGTIG…ALDSYIPEPE (195 aa)). The segment at 19–26 (GHVDHGKT) is G1. 19–26 (GHVDHGKT) serves as a coordination point for GTP. Thr26 contributes to the Mg(2+) binding site. The segment at 60–64 (GITIN) is G2. Residues 81–84 (DCPG) are G3. GTP contacts are provided by residues 81-85 (DCPGH) and 136-139 (NKCD). Positions 136 to 139 (NKCD) are G4. Positions 174–176 (SAL) are G5.

This sequence belongs to the TRAFAC class translation factor GTPase superfamily. Classic translation factor GTPase family. EF-Tu/EF-1A subfamily. Monomer.

It localises to the cytoplasm. It catalyses the reaction GTP + H2O = GDP + phosphate + H(+). GTP hydrolase that promotes the GTP-dependent binding of aminoacyl-tRNA to the A-site of ribosomes during protein biosynthesis. The chain is Elongation factor Tu from Sodalis glossinidius (strain morsitans).